Reading from the N-terminus, the 99-residue chain is Putative membrane protein insertion efficiency factor (99 aa).

The protein belongs to the UPF0161 family.

The protein resides in the cell membrane. Could be involved in insertion of integral membrane proteins into the membrane. The chain is Putative membrane protein insertion efficiency factor from Levilactobacillus brevis (strain ATCC 367 / BCRC 12310 / CIP 105137 / JCM 1170 / LMG 11437 / NCIMB 947 / NCTC 947) (Lactobacillus brevis).